We begin with the raw amino-acid sequence, 264 residues long: Phosphonoacetaldehyde hydrolase (264 aa).

D9 serves as the catalytic Nucleophile. D9 and A11 together coordinate Mg(2+). K50 acts as the Schiff-base intermediate with substrate in catalysis. D183 contacts Mg(2+).

Belongs to the HAD-like hydrolase superfamily. PhnX family. In terms of assembly, homodimer. The cofactor is Mg(2+).

The enzyme catalyses phosphonoacetaldehyde + H2O = acetaldehyde + phosphate + H(+). Functionally, involved in phosphonate degradation. The polypeptide is Phosphonoacetaldehyde hydrolase (Bacillus thuringiensis (strain Al Hakam)).